Here is a 551-residue protein sequence, read N- to C-terminus: Gliomedin (551 aa).

Over 1 to 17 (MARGAEGGRGDAGWGLR) the chain is Cytoplasmic. The helical; Signal-anchor for type II membrane protein transmembrane segment at 18 to 39 (GALAAVALLSALNAAGTVFALC) threads the bilayer. At 40-551 (QWRGLSSALR…VQFLSTTLNQ (512 aa)) the chain is on the extracellular side. A disordered region spans residues 72–107 (LSRAPRGASAPPQDPASSARNKRSHSGEPAPHIRAE). Over residues 79 to 90 (ASAPPQDPASSA) the composition is skewed to low complexity. N-linked (GlcNAc...) asparagine glycosylation occurs at N130. Collagen-like domains follow at residues 137–195 (LTGP…RGEK) and 196–222 (GDHGELGLQGNEGPPGQKGEKGDKGDV). Residues 139–282 (GPSGPPGPPG…GETCAIPNDD (144 aa)) are disordered. 2 stretches are compositionally biased toward basic and acidic residues: residues 191-200 (ERGEKGDHGE) and 213-222 (KGEKGDKGDV). Over residues 237-253 (PPGPPGPPGPPGPPGPP) the composition is skewed to pro residues. Positions 299–546 (QAESMITSIG…LMLYPVQFLS (248 aa)) constitute an Olfactomedin-like domain. N329, N357, N378, and N464 each carry an N-linked (GlcNAc...) asparagine glycan.

In terms of assembly, homotrimer (via collagen-like domains). Interacts with NRCAM and NFASC/neurofascin. Interaction with glial NRCAM enhances interaction with axonal NFASC. Interacts with MYOC. N-glycosylated. Post-translationally, proteolytic processing by a furin-like protease causes shedding of the ectodomain. Further cleavage by BMP1 releases the olfactomedin-like domain. As to expression, specifically expressed in spinal cord, brain, placenta and sciatic nerve. More abundant in peripheral than central nervous system.

The protein localises to the cell membrane. It is found in the cell projection. The protein resides in the axon. It localises to the secreted. Its subcellular location is the extracellular space. The protein localises to the extracellular matrix. Functionally, ligand for NRCAM and NFASC/neurofascin that plays a role in the formation and maintenance of the nodes of Ranvier on myelinated axons. Mediates interaction between Schwann cell microvilli and axons via its interactions with NRCAM and NFASC. Nodes of Ranvier contain clustered sodium channels that are crucial for the saltatory propagation of action potentials along myelinated axons. During development, nodes of Ranvier are formed by the fusion of two heminodes. Required for normal clustering of sodium channels at heminodes; not required for the formation of mature nodes with normal sodium channel clusters. Required, together with NRCAM, for maintaining NFASC and sodium channel clusters at mature nodes of Ranvier. The polypeptide is Gliomedin (GLDN) (Homo sapiens (Human)).